The sequence spans 155 residues: Microsomal glutathione S-transferase 1 (155 aa).

The Lumenal portion of the chain corresponds to 3 to 9 (DLRQLMD). A helical membrane pass occupies residues 10–33 (NEVLMAFTSYATIILTKMMFMSSA). Residues 34–62 (TAFQRITNKVFANPEDCAGFGKGENAKKF) lie on the Cytoplasmic side of the membrane. R38 is a glutathione binding site. K42, K55, and K60 each carry N6-acetyllysine. Residues 63 to 96 (VRTDEKVERVRRAHLNDLENIVPFLGIGLLYSLS) form a helical membrane-spanning segment. R73, R74, H76, and E81 together coordinate glutathione. At 97-99 (GPD) the chain is on the lumenal side. A helical transmembrane segment spans residues 100 to 123 (LSTALMHFRIFVGARIYHTIAYLT). A glutathione-binding site is contributed by Y121. The Cytoplasmic portion of the chain corresponds to 124–128 (PLPQP). A helical transmembrane segment spans residues 129-148 (NRGLAFFVGYGVTLSMAYRL). At 149–155 (LRSRLYL) the chain is on the lumenal side.

The protein belongs to the MAPEG family. As to quaternary structure, homotrimer; The trimer binds only one molecule of glutathione. In terms of processing, acetylation of Lys-42 and Lys-55 is observed in liver mitochondria from fasted mice but not from fed mice. Expressed in the testes (at protein level).

It localises to the endoplasmic reticulum membrane. Its subcellular location is the mitochondrion outer membrane. The enzyme catalyses RX + glutathione = an S-substituted glutathione + a halide anion + H(+). Its function is as follows. Conjugation of reduced glutathione to a wide number of exogenous and endogenous hydrophobic electrophiles. The chain is Microsomal glutathione S-transferase 1 (Mgst1) from Mus musculus (Mouse).